The chain runs to 249 residues: 3-deoxy-manno-octulosonate cytidylyltransferase (249 aa).

The protein belongs to the KdsB family.

It localises to the cytoplasm. The catalysed reaction is 3-deoxy-alpha-D-manno-oct-2-ulosonate + CTP = CMP-3-deoxy-beta-D-manno-octulosonate + diphosphate. Its pathway is nucleotide-sugar biosynthesis; CMP-3-deoxy-D-manno-octulosonate biosynthesis; CMP-3-deoxy-D-manno-octulosonate from 3-deoxy-D-manno-octulosonate and CTP: step 1/1. It participates in bacterial outer membrane biogenesis; lipopolysaccharide biosynthesis. Its function is as follows. Activates KDO (a required 8-carbon sugar) for incorporation into bacterial lipopolysaccharide in Gram-negative bacteria. The protein is 3-deoxy-manno-octulosonate cytidylyltransferase of Aliivibrio salmonicida (strain LFI1238) (Vibrio salmonicida (strain LFI1238)).